The chain runs to 323 residues: Lipoyl synthase (323 aa).

Positions 61, 66, 72, 87, 91, 94, and 303 each coordinate [4Fe-4S] cluster. In terms of domain architecture, Radical SAM core spans 73–292; sequence WTKKTATFLV…EQYGLSIGIP (220 aa).

This sequence belongs to the radical SAM superfamily. Lipoyl synthase family. The cofactor is [4Fe-4S] cluster.

The protein resides in the cytoplasm. The catalysed reaction is [[Fe-S] cluster scaffold protein carrying a second [4Fe-4S](2+) cluster] + N(6)-octanoyl-L-lysyl-[protein] + 2 oxidized [2Fe-2S]-[ferredoxin] + 2 S-adenosyl-L-methionine + 4 H(+) = [[Fe-S] cluster scaffold protein] + N(6)-[(R)-dihydrolipoyl]-L-lysyl-[protein] + 4 Fe(3+) + 2 hydrogen sulfide + 2 5'-deoxyadenosine + 2 L-methionine + 2 reduced [2Fe-2S]-[ferredoxin]. It participates in protein modification; protein lipoylation via endogenous pathway; protein N(6)-(lipoyl)lysine from octanoyl-[acyl-carrier-protein]: step 2/2. In terms of biological role, catalyzes the radical-mediated insertion of two sulfur atoms into the C-6 and C-8 positions of the octanoyl moiety bound to the lipoyl domains of lipoate-dependent enzymes, thereby converting the octanoylated domains into lipoylated derivatives. The protein is Lipoyl synthase of Protochlamydia amoebophila (strain UWE25).